The following is a 286-amino-acid chain: 4-hydroxybenzoate octaprenyltransferase (286 aa).

The next 7 membrane-spanning stretches (helical) occupy residues 21 to 40 (GTLL…AGGM), 96 to 116 (LFVI…GLVV), 142 to 162 (FLGV…TGEV), 167 to 187 (WWLF…YAMV), 210 to 230 (QIIG…GWSA), 235 to 255 (LYGL…MLIF), and 266 to 286 (FLNN…DYLF).

This sequence belongs to the UbiA prenyltransferase family. Mg(2+) is required as a cofactor.

It localises to the cell inner membrane. It carries out the reaction all-trans-octaprenyl diphosphate + 4-hydroxybenzoate = 4-hydroxy-3-(all-trans-octaprenyl)benzoate + diphosphate. It participates in cofactor biosynthesis; ubiquinone biosynthesis. Catalyzes the prenylation of para-hydroxybenzoate (PHB) with an all-trans polyprenyl group. Mediates the second step in the final reaction sequence of ubiquinone-8 (UQ-8) biosynthesis, which is the condensation of the polyisoprenoid side chain with PHB, generating the first membrane-bound Q intermediate 3-octaprenyl-4-hydroxybenzoate. In Shewanella sp. (strain ANA-3), this protein is 4-hydroxybenzoate octaprenyltransferase.